The chain runs to 456 residues: MPQNTLNIVILAAGKGTRMYSKMPKVLHRIGGKPMLGRVIDTAAALNPQNICVVVGHGKEQVLDTVKRDVVWVEQTEQLGTGHAVKTALPHLAAEGRTLVLYGDVPLIDVETLKTLLEAAGDKVGLLTDVPTDPTGLGRIIRDGNGSVTAIVEEKDASTAQKAVKETNTGILVLPNAKLENWLNSLSSNNAQGEYYLTDLIAKAVSDGIKVRPVRVRASHLAAGVNNKLQLAELERIFQTGQAQELLKAGVTLHDPARFDLRGRLKHGQDVVIDANCIFEGEIELGDNVEIGASCVIKNAKIGANTKIAPFSHLEDCEVGENNRIGPYARLRPQARLADDVHVGNFVEIKNAAIGKGTKANHLTYIGDAEVGSKTNFGAGTIIANYDGVHKHKTVIGNEVRIGSNCVLVAPVTLGNKVTTGAGSAITRNVEDGKLALARARQTVIEGWVRPEKDKQ.

The tract at residues 1–228 (MPQNTLNIVI…SHLAAGVNNK (228 aa)) is pyrophosphorylase. UDP-N-acetyl-alpha-D-glucosamine-binding positions include 11 to 14 (LAAG), Lys25, Gln75, 80 to 81 (GT), 102 to 104 (YGD), Gly138, Glu153, Asn168, and Asn226. Asp104 contacts Mg(2+). Position 226 (Asn226) interacts with Mg(2+). The tract at residues 229 to 249 (LQLAELERIFQTGQAQELLKA) is linker. The segment at 250 to 456 (GVTLHDPARF…GWVRPEKDKQ (207 aa)) is N-acetyltransferase. UDP-N-acetyl-alpha-D-glucosamine-binding residues include Arg332 and Lys350. The active-site Proton acceptor is His362. Residues Tyr365 and Asn376 each contribute to the UDP-N-acetyl-alpha-D-glucosamine site. Residues Ala379, 385–386 (NY), Ser404, Ala422, and Arg439 each bind acetyl-CoA.

This sequence in the N-terminal section; belongs to the N-acetylglucosamine-1-phosphate uridyltransferase family. It in the C-terminal section; belongs to the transferase hexapeptide repeat family. As to quaternary structure, homotrimer. Requires Mg(2+) as cofactor.

The protein localises to the cytoplasm. It catalyses the reaction alpha-D-glucosamine 1-phosphate + acetyl-CoA = N-acetyl-alpha-D-glucosamine 1-phosphate + CoA + H(+). The enzyme catalyses N-acetyl-alpha-D-glucosamine 1-phosphate + UTP + H(+) = UDP-N-acetyl-alpha-D-glucosamine + diphosphate. It participates in nucleotide-sugar biosynthesis; UDP-N-acetyl-alpha-D-glucosamine biosynthesis; N-acetyl-alpha-D-glucosamine 1-phosphate from alpha-D-glucosamine 6-phosphate (route II): step 2/2. The protein operates within nucleotide-sugar biosynthesis; UDP-N-acetyl-alpha-D-glucosamine biosynthesis; UDP-N-acetyl-alpha-D-glucosamine from N-acetyl-alpha-D-glucosamine 1-phosphate: step 1/1. It functions in the pathway bacterial outer membrane biogenesis; LPS lipid A biosynthesis. Functionally, catalyzes the last two sequential reactions in the de novo biosynthetic pathway for UDP-N-acetylglucosamine (UDP-GlcNAc). The C-terminal domain catalyzes the transfer of acetyl group from acetyl coenzyme A to glucosamine-1-phosphate (GlcN-1-P) to produce N-acetylglucosamine-1-phosphate (GlcNAc-1-P), which is converted into UDP-GlcNAc by the transfer of uridine 5-monophosphate (from uridine 5-triphosphate), a reaction catalyzed by the N-terminal domain. This Neisseria meningitidis serogroup C (strain 053442) protein is Bifunctional protein GlmU.